The primary structure comprises 327 residues: Flotillin-like protein FloA (327 aa).

2 consecutive transmembrane segments (helical) span residues 8–28 (VLLI…LVPI) and 29–49 (PLWI…LVGM).

It belongs to the flotillin-like FloA family. In terms of assembly, homooligomerizes.

The protein localises to the cell membrane. It localises to the membrane raft. Functionally, found in functional membrane microdomains (FMM) that may be equivalent to eukaryotic membrane rafts. FMMs are highly dynamic and increase in number as cells age. Flotillins are thought to be important factors in membrane fluidity. This Exiguobacterium sibiricum (strain DSM 17290 / CCUG 55495 / CIP 109462 / JCM 13490 / 255-15) protein is Flotillin-like protein FloA.